Reading from the N-terminus, the 347-residue chain is MPENIAFLTNSTDLGHVGRALGSSARPAWAIAVLASVLIFTTVVDVLGNLLVIISVFRNRKLRNAGNVFVVSLAFADLVVAFYPYPLVLYAIFHDGWSLGETQCKISGFLMGLSVIGSVFNITGIAINRYCYICHSFAYGRLYSFRNTLLLVALIWALTVLAILPNFFVGSLSYDPRVYSCTFTQTASSSYTVVVVVVHFLVPIAVVTFCYLRIWVLVIQVRRKVKSEERSRVRPSDLRNFVTMFVVFVLFAICWAPLNLIGLVVAINPEVMAPRVPEWLFVVSYFMAYFNSCLNAIIYGLLNRNFRKEYVRIMTAVWIPRRFVTETSRAATDGMRSKPSPAINNNE.

Over 1–36 the chain is Extracellular; it reads MPENIAFLTNSTDLGHVGRALGSSARPAWAIAVLAS. Asn-10 carries N-linked (GlcNAc...) asparagine glycosylation. A helical transmembrane segment spans residues 37 to 57; that stretch reads VLIFTTVVDVLGNLLVIISVF. Residues 58-72 are Cytoplasmic-facing; the sequence is RNRKLRNAGNVFVVS. A helical transmembrane segment spans residues 73 to 93; it reads LAFADLVVAFYPYPLVLYAIF. Residues 94-105 are Extracellular-facing; it reads HDGWSLGETQCK. A disulfide bond links Cys-104 and Cys-181. Residues 106–126 form a helical membrane-spanning segment; that stretch reads ISGFLMGLSVIGSVFNITGIA. Residues 127–148 lie on the Cytoplasmic side of the membrane; it reads INRYCYICHSFAYGRLYSFRNT. The chain crosses the membrane as a helical span at residues 149-169; sequence LLLVALIWALTVLAILPNFFV. Residues 170-191 are Extracellular-facing; it reads GSLSYDPRVYSCTFTQTASSSY. The chain crosses the membrane as a helical span at residues 192–212; the sequence is TVVVVVVHFLVPIAVVTFCYL. Residues 213–244 are Cytoplasmic-facing; that stretch reads RIWVLVIQVRRKVKSEERSRVRPSDLRNFVTM. Residues 245–265 traverse the membrane as a helical segment; the sequence is FVVFVLFAICWAPLNLIGLVV. The Extracellular segment spans residues 266-278; that stretch reads AINPEVMAPRVPE. The helical transmembrane segment at 279–299 threads the bilayer; sequence WLFVVSYFMAYFNSCLNAIIY. The Cytoplasmic segment spans residues 300–347; it reads GLLNRNFRKEYVRIMTAVWIPRRFVTETSRAATDGMRSKPSPAINNNE.

The protein belongs to the G-protein coupled receptor 1 family.

It is found in the cell membrane. High affinity receptor for melatonin. The activity of this receptor is mediated by pertussis toxin sensitive G proteins that inhibits adenylate cyclase activity. This Danio rerio (Zebrafish) protein is Melatonin receptor type 1B-B (mtnr1bb).